The following is a 303-amino-acid chain: Peroxisomal trans-2-enoyl-CoA reductase (303 aa).

23–47 (VTGGATGIGKAIVKELLELGSNVVI) is an NADP(+) binding site. Residue lysine 32 is modified to N6-succinyllysine. At serine 49 the chain carries Phosphoserine. Tyrosine 179 serves as the catalytic Proton acceptor. Position 179 is a phosphotyrosine (tyrosine 179). The Microbody targeting signal motif lies at 301-303 (AKL).

It belongs to the short-chain dehydrogenases/reductases (SDR) family. In terms of assembly, interacts with PEX5, probably required to target it into peroxisomes.

The protein localises to the peroxisome. The catalysed reaction is a (2E)-enoyl-CoA + NADPH + H(+) = a 2,3-saturated acyl-CoA + NADP(+). The enzyme catalyses (2E)-decenoyl-CoA + NADPH + H(+) = decanoyl-CoA + NADP(+). It carries out the reaction (2E)-hexenoyl-CoA + NADPH + H(+) = hexanoyl-CoA + NADP(+). It catalyses the reaction (2E)-octenoyl-CoA + NADPH + H(+) = octanoyl-CoA + NADP(+). The catalysed reaction is (2E)-dodecenoyl-CoA + NADPH + H(+) = dodecanoyl-CoA + NADP(+). The enzyme catalyses (2E)-tetradecenoyl-CoA + NADPH + H(+) = tetradecanoyl-CoA + NADP(+). It participates in lipid metabolism; fatty acid biosynthesis. Participates in chain elongation of fatty acids. Catalyzes the reduction of trans-2-enoyl-CoAs of varying chain lengths from 6:1 to 16:1, having maximum activity with 10:1 CoA. Has no 2,4-dienoyl-CoA reductase activity. This Homo sapiens (Human) protein is Peroxisomal trans-2-enoyl-CoA reductase.